The sequence spans 421 residues: Putative hydro-lyase KRH_21160 (421 aa).

Disordered stretches follow at residues 200–298 and 312–421; these read TWGH…SPVT and TRAG…AVSR. Positions 224–237 are enriched in basic residues; sequence GSRRRPRWWSRLRR. 2 stretches are compositionally biased toward low complexity: residues 243 to 260 and 370 to 380; these read PRAT…TRCP and SRGPGPCPRAA.

This sequence belongs to the D-glutamate cyclase family.

The protein is Putative hydro-lyase KRH_21160 of Kocuria rhizophila (strain ATCC 9341 / DSM 348 / NBRC 103217 / DC2201).